We begin with the raw amino-acid sequence, 254 residues long: Geranylgeranylglyceryl phosphate synthase (254 aa).

Mg(2+)-binding residues include Asp28 and Ser53. Sn-glycerol 1-phosphate contacts are provided by residues 172–178, 203–204, and 225–226; these read YLEAGSG, GG, and GT.

The protein belongs to the GGGP/HepGP synthase family. Group II subfamily. It depends on Mg(2+) as a cofactor.

It is found in the cytoplasm. The catalysed reaction is sn-glycerol 1-phosphate + (2E,6E,10E)-geranylgeranyl diphosphate = sn-3-O-(geranylgeranyl)glycerol 1-phosphate + diphosphate. Its pathway is membrane lipid metabolism; glycerophospholipid metabolism. Prenyltransferase that catalyzes the transfer of the geranylgeranyl moiety of geranylgeranyl diphosphate (GGPP) to the C3 hydroxyl of sn-glycerol-1-phosphate (G1P). This reaction is the first ether-bond-formation step in the biosynthesis of archaeal membrane lipids. This chain is Geranylgeranylglyceryl phosphate synthase, found in Methanococcus vannielii (strain ATCC 35089 / DSM 1224 / JCM 13029 / OCM 148 / SB).